The following is a 354-amino-acid chain: UDP-N-acetylglucosamine--N-acetylmuramyl-(pentapeptide) pyrophosphoryl-undecaprenol N-acetylglucosamine transferase (354 aa).

Residues 11-13 (TAG), Arg-164, Ser-194, and Gln-289 contribute to the UDP-N-acetyl-alpha-D-glucosamine site.

Belongs to the glycosyltransferase 28 family. MurG subfamily.

The protein localises to the cell membrane. The catalysed reaction is di-trans,octa-cis-undecaprenyl diphospho-N-acetyl-alpha-D-muramoyl-L-alanyl-D-glutamyl-meso-2,6-diaminopimeloyl-D-alanyl-D-alanine + UDP-N-acetyl-alpha-D-glucosamine = di-trans,octa-cis-undecaprenyl diphospho-[N-acetyl-alpha-D-glucosaminyl-(1-&gt;4)]-N-acetyl-alpha-D-muramoyl-L-alanyl-D-glutamyl-meso-2,6-diaminopimeloyl-D-alanyl-D-alanine + UDP + H(+). The protein operates within cell wall biogenesis; peptidoglycan biosynthesis. Its function is as follows. Cell wall formation. Catalyzes the transfer of a GlcNAc subunit on undecaprenyl-pyrophosphoryl-MurNAc-pentapeptide (lipid intermediate I) to form undecaprenyl-pyrophosphoryl-MurNAc-(pentapeptide)GlcNAc (lipid intermediate II). The polypeptide is UDP-N-acetylglucosamine--N-acetylmuramyl-(pentapeptide) pyrophosphoryl-undecaprenol N-acetylglucosamine transferase (Lachnospira eligens (strain ATCC 27750 / DSM 3376 / VPI C15-48 / C15-B4) (Eubacterium eligens)).